We begin with the raw amino-acid sequence, 221 residues long: Immunoregulatory peptides (221 aa).

Positions 1–19 (MNYLCLVVTLVAVAGAISG) are cleaved as a signal peptide. Residues 20 to 45 (EKFSDDNTGYQSTPSLRIRTTPGRRR) constitute a propeptide that is removed on maturation. The segment at 21–155 (KFSDDNTGYQ…PRTIGPPYTR (135 aa)) is disordered. Residues 25 to 34 (DNTGYQSTPS) show a composition bias toward polar residues. Positions 48–69 (PRTIGPPYTRRTLRTTTDYSTT) are enriched in low complexity. Composition is skewed to polar residues over residues 70–85 (VENG…STEK) and 123–133 (NGTTPAANSTE). The propeptide occupies 191–221 (EISWTFGPLYTWRTTKGYGTTLETTNATSTS).

As to expression, salivary glands.

Its subcellular location is the secreted. In terms of biological role, suppress host inflammatory response. Exerts significant anti-inflammatory functions, either by directly inhibiting host secretion of inflammatory factors such as tumor necrosis factor-alpha (TNF), monocyte chemotactic protein-1 (CCL2), and interferon-gamma (IFNG) or by indirectly increasing the secretion of immunosuppressant cytokine of interleukin-10 (IL10). Also potently scavenges free radical in vitro in a rapid manner. All tested concentrations of this peptide have little effect on the cell viability. In vivo, inhibits hind paw adjuvant-induced inflammation in mouse in a dose-dependent manner. Functionally, suppress host inflammatory response. Exerts significant anti-inflammatory functions, either by directly inhibiting host secretion of inflammatory factors such as tumor necrosis factor-alpha (TNF), monocyte chemotactic protein-1 (CCL2), and interferon-gamma (IFNG) or by indirectly increasing the secretion of immunosuppressant cytokine of interleukin-10 (IL10). Also potently scavenges free radical in vitro in a rapid manner. Low concentrations of this peptide have little effect on the cell viability, whereas high concentrations increase the cell viability by 10-20%. In vivo, inhibits hind paw adjuvant-induced inflammation in mouse in a dose-dependent manner. Not studied but probably similar to Hyalomin-B1. This Hyalomma asiaticum asiaticum (Tick) protein is Immunoregulatory peptides.